The chain runs to 359 residues: 3-dehydroquinate synthase (359 aa).

NAD(+) contacts are provided by residues 71 to 76 (DGEQFK), 105 to 109 (GVIGD), 129 to 130 (TT), lysine 142, lysine 151, and 169 to 172 (CLHT). Zn(2+) contacts are provided by glutamate 184, histidine 247, and histidine 264.

The protein belongs to the sugar phosphate cyclases superfamily. Dehydroquinate synthase family. Requires Co(2+) as cofactor. Zn(2+) serves as cofactor. NAD(+) is required as a cofactor.

Its subcellular location is the cytoplasm. It carries out the reaction 7-phospho-2-dehydro-3-deoxy-D-arabino-heptonate = 3-dehydroquinate + phosphate. Its pathway is metabolic intermediate biosynthesis; chorismate biosynthesis; chorismate from D-erythrose 4-phosphate and phosphoenolpyruvate: step 2/7. In terms of biological role, catalyzes the conversion of 3-deoxy-D-arabino-heptulosonate 7-phosphate (DAHP) to dehydroquinate (DHQ). The protein is 3-dehydroquinate synthase of Shewanella sp. (strain W3-18-1).